Here is a 182-residue protein sequence, read N- to C-terminus: MATTRLKTLYQETIIPKLTQQFQYTNVHQVPKLVKITVNRGLGEAAQNAKSLEASLTEIATITGQKPVVTRAKKAIAGFKIRQGMPVGIMVTLRGERMYAFFDRLISLSLPRIRDFRGISPKSFDGRGNYTLGVREQLIFPEIEYDSIDQIRGLDISIITTAKNDEEGRALLKEFGMPFRDQ.

It belongs to the universal ribosomal protein uL5 family. Part of the 50S ribosomal subunit; part of the 5S rRNA/L5/L18/L25 subcomplex. Contacts the 5S rRNA and the P site tRNA. Forms a bridge to the 30S subunit in the 70S ribosome.

Functionally, this is one of the proteins that bind and probably mediate the attachment of the 5S RNA into the large ribosomal subunit, where it forms part of the central protuberance. In the 70S ribosome it contacts protein S13 of the 30S subunit (bridge B1b), connecting the 2 subunits; this bridge is implicated in subunit movement. Contacts the P site tRNA; the 5S rRNA and some of its associated proteins might help stabilize positioning of ribosome-bound tRNAs. This Trichormus variabilis (strain ATCC 29413 / PCC 7937) (Anabaena variabilis) protein is Large ribosomal subunit protein uL5.